A 190-amino-acid chain; its full sequence is Molybdenum cofactor guanylyltransferase (190 aa).

Residues 10–12 (LAG), Lys-23, Asn-51, Asp-69, and Asp-99 each bind GTP. Residue Asp-99 coordinates Mg(2+).

It belongs to the MobA family. In terms of assembly, monomer. The cofactor is Mg(2+).

It is found in the cytoplasm. The enzyme catalyses Mo-molybdopterin + GTP + H(+) = Mo-molybdopterin guanine dinucleotide + diphosphate. In terms of biological role, transfers a GMP moiety from GTP to Mo-molybdopterin (Mo-MPT) cofactor (Moco or molybdenum cofactor) to form Mo-molybdopterin guanine dinucleotide (Mo-MGD) cofactor. This is Molybdenum cofactor guanylyltransferase from Mannheimia succiniciproducens (strain KCTC 0769BP / MBEL55E).